The primary structure comprises 597 residues: Proline--tRNA ligase (597 aa).

This sequence belongs to the class-II aminoacyl-tRNA synthetase family. ProS type 1 subfamily. As to quaternary structure, homodimer.

It is found in the cytoplasm. The enzyme catalyses tRNA(Pro) + L-proline + ATP = L-prolyl-tRNA(Pro) + AMP + diphosphate. In terms of biological role, catalyzes the attachment of proline to tRNA(Pro) in a two-step reaction: proline is first activated by ATP to form Pro-AMP and then transferred to the acceptor end of tRNA(Pro). As ProRS can inadvertently accommodate and process non-cognate amino acids such as alanine and cysteine, to avoid such errors it has two additional distinct editing activities against alanine. One activity is designated as 'pretransfer' editing and involves the tRNA(Pro)-independent hydrolysis of activated Ala-AMP. The other activity is designated 'posttransfer' editing and involves deacylation of mischarged Ala-tRNA(Pro). The misacylated Cys-tRNA(Pro) is not edited by ProRS. In Bifidobacterium longum (strain NCC 2705), this protein is Proline--tRNA ligase.